Consider the following 332-residue polypeptide: UPF0194 membrane protein YbhG (332 aa).

The N-terminal stretch at Met1–Ala16 is a signal peptide. Residues Glu108–Ala209 adopt a coiled-coil conformation.

It belongs to the UPF0194 family.

It localises to the periplasm. In Shigella boydii serotype 4 (strain Sb227), this protein is UPF0194 membrane protein YbhG.